The chain runs to 312 residues: MAMGSASCISLVVLVALATAASGQLSSTFYDTSCPRALVAIKSGVAAAVSSDPRMGASLLRLHFHDCFGCDASVLLTGMEQNAGPNVGSLRGFGVIDNIKTQLESVCKQTVSCADILTVAARDSVVALGGPSWTVPLGRRDSTTASASLANSDLPGPSSSRSQLEAAFLKKNLNTVDMVALSGAHTIGKAQCSNFRTRIYGGDTNINTAFATSLKANCPQSGGNTNLANLDTMTPNAFDNAYYTNLLSQKGLLHSDQVLFNNETTDNTVRNFASNAAAFSSAFTTAMIKMGNIAPLTGTQGQIRLSCSKVNS.

Positions 1–23 (MAMGSASCISLVVLVALATAASG) are cleaved as a signal peptide. Glutamine 24 carries the post-translational modification Pyrrolidone carboxylic acid. 4 disulfide bridges follow: cysteine 34/cysteine 107, cysteine 67/cysteine 70, cysteine 113/cysteine 307, and cysteine 192/cysteine 218. Histidine 65 serves as the catalytic Proton acceptor. Ca(2+) contacts are provided by aspartate 66, glycine 69, aspartate 71, and serine 73. Proline 155 provides a ligand contact to substrate. Residue histidine 185 coordinates heme b. Threonine 186 provides a ligand contact to Ca(2+). 3 residues coordinate Ca(2+): aspartate 231, threonine 234, and aspartate 239. Asparagine 262 carries N-linked (GlcNAc...) asparagine glycosylation.

Belongs to the peroxidase family. Classical plant (class III) peroxidase subfamily. Ca(2+) serves as cofactor. The cofactor is heme b. As to expression, root.

It localises to the secreted. It catalyses the reaction 2 a phenolic donor + H2O2 = 2 a phenolic radical donor + 2 H2O. In terms of biological role, removal of H(2)O(2), oxidation of toxic reductants, biosynthesis and degradation of lignin, suberization, auxin catabolism, response to environmental stresses such as wounding, pathogen attack and oxidative stress. These functions might be dependent on each isozyme/isoform in each plant tissue. Its function is as follows. Involved in defense response to powdery meldew fungus. This Triticum aestivum (Wheat) protein is Peroxidase.